A 460-amino-acid chain; its full sequence is Cysteine--tRNA ligase (460 aa).

Cys29 is a Zn(2+) binding site. The 'HIGH' region motif lies at 31 to 41 (MTVYDYMHIGH). Residues Cys210, His235, and Glu239 each contribute to the Zn(2+) site. The short motif at 267–271 (KMSKS) is the 'KMSKS' region element. Position 270 (Lys270) interacts with ATP.

This sequence belongs to the class-I aminoacyl-tRNA synthetase family. In terms of assembly, monomer. Zn(2+) serves as cofactor.

The protein localises to the cytoplasm. The enzyme catalyses tRNA(Cys) + L-cysteine + ATP = L-cysteinyl-tRNA(Cys) + AMP + diphosphate. This chain is Cysteine--tRNA ligase, found in Coxiella burnetii (strain RSA 493 / Nine Mile phase I).